We begin with the raw amino-acid sequence, 241 residues long: Small ribosomal subunit protein uS2 (241 aa).

It belongs to the universal ribosomal protein uS2 family.

This Salmonella agona (strain SL483) protein is Small ribosomal subunit protein uS2.